Reading from the N-terminus, the 1512-residue chain is MDRNAVLYGVLEHRLPKWVELSDDTDLEPFFFSSVRYITAGSEDAIMIQALNLNTDEIVVFLVTNLNFMALIPTVYIENPGIRQLIASTPISYRSPITVFNGDLKKWMDCDLFVFGTMAAQKAFIKAGNSVLGSLGGNVYTYGDHVSNFDGNTPVLQNNLMCSHVYYTRYKTDVYAPWEFYYDQKRDQGYLMSLPAIIPRCKREGAFDIETIVHENAMDQDLNCQKFFKSEFRSMEESQVLIQRFREAGVTGLPPSPFVGITQKLHEIVSISLVVCNYHKTGPKKKEYYVYYNTKKMENPMEMIPVEHLHLDASRIKFEACKNEFYMLLAFINRLRKSVNVLYVYNAQFDIQVIQQRLRYYAFKQRAPRCCKGHDDIPHEWGKALMEKWEAFLSVKPQLFKAQILMGQDILKANYLKLLEGIGSVLAQAKSTMAKMCTIKERIDSYRKMKDTVQNFKSHGFGCDIIDMMYVCKRKEFEAKDGSLNTVAQLIIKKFKPHKATPKIHKMDDITYDKLDGYYRAGGTKIAECLIYNLIDSLLVIRIAKNLKPMEEYIYRQLACYNIDTAAHTRGVMNFCGFIQSTKVVEVSRNKARLDAGIVMATDYIRNSLFTPETIPRRGGFVMAPLTGLFFARPTQCFELCLDFTSMYPSMMCDLNISPETIVDSDKTNRVGDYMGYDWSKIDQGFEKFTLVLRVDRTDPENPKLVRHTSDTSLSLKRYLRLRTEHKRALKQSSGSVAEYHNRLQNEMKICTNTHYGVSEHTCSLMITTQGQHKIKLVNEFIKTLNRTGHSLFPNYGDTDSTMLYHPSDESETQLEDMVTLEDEMRAELREYMLKKLSAELVNRVKEKTKRTDTFVQSFLSDVETVLFDDMVEKLRLFSQGEVIEPFKDGGTWWVVDPLTGIWMDCSTPFSSELICKLEYENASSIGCHVAKKMYLSLVHELNNGEIINTKIKKRGMTGFKSSRFGATESITNDFMDLIFNGGALVKTGHLEALKPVTWAKLSAPADILHFSEPPVYENGICLNMNSITLIPHRVTAVTRLPCPDIKGGELVYVDLHESTSGKSSVLVLVLADGCALNHIFSSANVLHRELSFETIAMFRAFFVGAGFLDPNSIVFYERIPRLKPEFLSKITNYELFTGKKLKIPFVTLHKRKTTIQAIVKEDKKQIDYPEEWIKQDPAMAMFRRYPIDLRLERMIMDYFGSGLKCTLATFTPPKYTVSGERSRHSIVIKNHVDKHYLNDNSKFLAHVVMDRAMPTTCYIHDDIDVKAMIQSVISRVVRMIQDTQVRLQELSAAGNKLFHMFFNQLPPEMNNLDISFKYNPLVDHALQGQKGVPGLQYGNPEQIYTDMITEMTALLPRIGHMVEFMEWSQELSSSKTLCLLLPKIARDLNVPPLVTSLNDDTGNAMLIAFAHKIYIATAMLHILHGENLETHDLGPQTGTGVVGEPPKHCTGAQLREWFIDLQKTLALDAPSTHCAGCADFWLTHGSDPNFIEKMYRVNGGVFVRKIKKICL.

This sequence belongs to the DNA polymerase type-B family.

Its subcellular location is the host nucleus. It carries out the reaction DNA(n) + a 2'-deoxyribonucleoside 5'-triphosphate = DNA(n+1) + diphosphate. The protein is DNA polymerase (57/58) of Ictalurid herpesvirus 1 (strain Auburn) (IcHV-1).